A 106-amino-acid chain; its full sequence is SH3 domain-binding glutamic acid-rich-like protein 2-A (106 aa).

An SH3-binding motif is present at residues Gln61 to Pro67.

The protein belongs to the SH3BGR family.

Its subcellular location is the nucleus. This is SH3 domain-binding glutamic acid-rich-like protein 2-A (sh3bgrl2-a) from Xenopus laevis (African clawed frog).